Reading from the N-terminus, the 620-residue chain is Protein NRT1/ PTR FAMILY 2.13 (620 aa).

A disordered region spans residues 1–32 (MVLEDRKDGSSLPGRSGSFSKSSPSELDVVDP). Positions 10 to 25 (SSLPGRSGSFSKSSPS) are enriched in low complexity. The next 12 membrane-spanning stretches (helical) occupy residues 70–90 (LGSI…FHLE), 95–115 (ANVI…GAYI), 126–146 (IAFA…TASF), 167–187 (KLQI…SGGI), 213–233 (FFNW…TVVV), 241–261 (WIIG…MFFA), 364–384 (IVPI…QGTF), 402–422 (IPAG…LPFY), 443–463 (LQRI…AGIV), 485–505 (VFWL…NIIG), 524–544 (SLFS…VTVV), and 568–588 (YFYY…WYCA).

It belongs to the major facilitator superfamily. Proton-dependent oligopeptide transporter (POT/PTR) (TC 2.A.17) family. Interacts with NLA. Post-translationally, ubiquitinated by NLA. Ubiquitination of NPF2.13 leads to its degradation by the proteasome. As to expression, expressed in leaves and flowers. Detected in stems and siliques. Highest expression in the distal lamina of older leaves. Restricted to the sieve element and companion cell complex of the minor vein.

The protein localises to the cell membrane. Its function is as follows. Low-affinity proton-dependent nitrate transporter. Not involved in dipeptides transport, but has a weak glucosinolate transport activity. Involved in phloem loading and nitrate remobilization from the older leaves to other tissues. This chain is Protein NRT1/ PTR FAMILY 2.13 (NPF2.13), found in Arabidopsis thaliana (Mouse-ear cress).